Reading from the N-terminus, the 148-residue chain is Deoxyuridine 5'-triphosphate nucleotidohydrolase (148 aa).

Residues 67-69 (RSG), Asn80, 84-86 (LID), and Met94 contribute to the substrate site.

It belongs to the dUTPase family. Requires Mg(2+) as cofactor.

It carries out the reaction dUTP + H2O = dUMP + diphosphate + H(+). The protein operates within pyrimidine metabolism; dUMP biosynthesis; dUMP from dCTP (dUTP route): step 2/2. Its function is as follows. This enzyme is involved in nucleotide metabolism: it produces dUMP, the immediate precursor of thymidine nucleotides and it decreases the intracellular concentration of dUTP so that uracil cannot be incorporated into DNA. The sequence is that of Deoxyuridine 5'-triphosphate nucleotidohydrolase from Francisella philomiragia subsp. philomiragia (strain ATCC 25017 / CCUG 19701 / FSC 153 / O#319-036).